Reading from the N-terminus, the 1582-residue chain is MSIPAMPFITGPVAEPQEQLRLSPPRGRLSAIIPLSKVQEVLWVDYLRQPWATHYNLTLKVDLTGSNLSLESIMNNIHKLGSRHDMLRTTFHIDSSAQHTSQSYMAVHDAASSFQNIAIVSDDARLQQALRRGLDLSTEFPVQWIVHQAYSVVDGRLVAAHTVYAMGHHIAVDGTSMSHLSRELVQLIQDGDTTTPPPPPPPSYGEFVQRQAAYLRSPEAQDAEAFWLAQIAHTTPHRWTHAAPLPASAPGHDYRKMDTWAFFPSDELAAWSQLYRTSWFRVAVSVIGLVTAGHARPAPHHDSTLQVAFGARAPSFAGCVSHMANTMPIRQPVSSLLRRSGSATFAELVQLVGKNISQAKKNEMYPFLSLVEAAARDGEDTAAASRVAVTLSPRLADDRCTLYPVNGVWDLFFCFLEHADGGVALGVISDPAVFGPAALAALRADVLRTVALSQQTPDFPLTSALSCLADRQVATLAGGPDVEDVDAVIAARVVSDWIRSRAATQPDEIALSNGEDGTSLTYGALDASSDRKAVHLQRLGAGRNDVVVLQLGAVFDMVAWILAVHKAGACFVVLDRQLPLARKQAILRVADAKLFVSDAFDDAYFADCATPPTTVSVWADTAVPADAHLAPVSGAAPTDLAYLVFTSGSTGLPKAIEVEHQNLSSYVSATRAVVPVGRGSRVLQFAPFAFDASVLEWAVTLSYGGTLCFVQHPALLVGDYLADMVDLNQINFFHTTPSVLATIPDGRRLPSLRALSVGGEASSAGLLDKWSRRLHLIHAYGPTETTVICATEHILPASDTLPSPSNIGRANPHVALLICPEDAETVLGPGVTGEICIAGPQVTRGYRGQPALTAAQFRTMEHNGRVTRMYRSGDRGFIGDDGKLHILGRMNNREIKLRGFRMDLAAIEKSILDNCPEVMTASVQVVDDKLVAFACPATLQGDAIRQRIALDLPSYSVPADITAVDSLPLNTNGKVDHKEVLQQFGASTGPAAAIKPVIVTKTAPKKKELQTSDSNLVDRLEASITTLWQKVLGCRDAPGPDVTFYNAGGHSILLSALHKELVTLYPAAKISLLDVFYNPTIRRQAQRLSELVGDDGFIPSSSVSDVSAQDVATPGNSTTATSVAADAPLFAIVGMAGRFPGADSVEAMWELLMAQRDGITTSDGAGAESADLAEGEVFVPRYGSINGLEDFRASDWNMSDEDAQVLDPQKRMFLMIAEEALQDASIPVRTVSGSNIGTFVGIAPNTYLSSALPSSVSSSAFERRYKAVLDPTASTLTAYKLNLLGPSMDVSAACASSLVAVHQALRALRAGDCAAALVGGVSLAYPQLGGYATSDGKIFSARGQCRPLDAAADGSVPADGVAAVVLKPLVAAQTDGDRVYAVIQGHAIGTDGAVDKIGFTVPSSSGQAKVISAAMADARLARHQGVRYVEMHGSGTSIGDALEYKGIERAVAAYEATGGESRCSSGAISPTGTEQQPSDTKQTPRTLFVGSNKGNFGNAEAASGLFSLIKASLAVSRGVVPPLRQLGDCNELMGVAEGSTVQPLRKQLRLEKGDRVGVTALGYGGVNAHCILASLEAVEERE.

Residues 33–387 (IPLSKVQEVL…GEDTAAASRV (355 aa)) are condensation (C) domain. The tract at residues 499–892 (RSRAATQPDE…KLHILGRMNN (394 aa)) is adenylation (A) domain. The Carrier domain occupies 1015–1092 (NLVDRLEASI…RQAQRLSELV (78 aa)). Residues 1127–1574 (APLFAIVGMA…GVNAHCILAS (448 aa)) form the Ketosynthase family 3 (KS3) domain. Residues Cys1294 and His1432 each act as for beta-ketoacyl synthase activity in the active site. Positions 1460–1485 (ESRCSSGAISPTGTEQQPSDTKQTPR) are disordered. Polar residues predominate over residues 1462-1485 (RCSSGAISPTGTEQQPSDTKQTPR). The active-site For beta-ketoacyl synthase activity is the Asn1498.

It in the N-terminal section; belongs to the NRP synthetase family. It depends on pantetheine 4'-phosphate as a cofactor.

The enzyme catalyses acetoacetyl-CoA + L-isoleucine + ATP = tenuazonic acid + AMP + diphosphate + CoA + 2 H(+). In terms of biological role, hybrid PKS-NRPS synthetase that mediates the biosynthesis of the toxin tenuazonic acid (TeA), an inhibitor of protein biosynthesis on ribosomes by suppressing the release of new protein. TAS1 alone is sufficient for TeA synthesis via the condensation of isoleucine (Ile) with acetoacetyl-CoA by the N-terminal NRPS module and subsequent cyclization conducted by the C-terminal KS domain. In Cordyceps militaris (strain CM01) (Caterpillar fungus), this protein is Hybrid PKS-NRPS synthetase TAS1.